The following is a 271-amino-acid chain: Beta-lactamase (271 aa).

The Acyl-ester intermediate role is filled by serine 46. Residue 210–212 (KTG) coordinates substrate.

It belongs to the class-A beta-lactamase family. In terms of assembly, monomer.

It catalyses the reaction a beta-lactam + H2O = a substituted beta-amino acid. Functionally, hydrolyzes broad-spectrum beta-lactam antibiotics. Active against cephalosporins. This is Beta-lactamase from Proteus vulgaris.